We begin with the raw amino-acid sequence, 131 residues long: MNLIQELEKEQLDKLATGKTIPDFGPGDTVTVNVKVKEGDRTRVQAYEGVCIGRNGGGINESFTVRKISYGEGVERVFPIYSPMIDSIKLVRRGKVRRAKLYYLRGRRGKSARIVEKQDQRQTTTAAAAAE.

The protein belongs to the bacterial ribosomal protein bL19 family.

Its function is as follows. This protein is located at the 30S-50S ribosomal subunit interface and may play a role in the structure and function of the aminoacyl-tRNA binding site. The polypeptide is Large ribosomal subunit protein bL19 (Afipia carboxidovorans (strain ATCC 49405 / DSM 1227 / KCTC 32145 / OM5) (Oligotropha carboxidovorans)).